A 327-amino-acid polypeptide reads, in one-letter code: Thioredoxin reductase sirT (327 aa).

Residues 15–18, 37–42, histidine 50, and alanine 115 contribute to the FAD site; these read AGPA and DTGVFR. A disulfide bridge links cysteine 139 with cysteine 142. FAD contacts are provided by residues aspartate 289 and 296–297; that span reads QV.

The protein belongs to the class-II pyridine nucleotide-disulfide oxidoreductase family. Homodimer. FAD serves as cofactor.

It functions in the pathway mycotoxin biosynthesis. In terms of biological role, thioredoxin reductase; part of the gene cluster that mediates the biosynthesis of sirodesmin PL, an epipolythiodioxopiperazine (ETP) characterized by a disulfide bridged cyclic dipeptide and that acts as a phytotoxin which is involved in the blackleg didease of canola. SirD catalyzes the O-prenylation of L-tyrosine (L-Tyr) in the presence of dimethylallyl diphosphate (DMAPP) to yield 4-O-dimethylallyl-L-Tyr, and therefore represents probably the first pathway-specific enzyme in the biosynthesis of sirodesmin PL. 4-O-dimethylallyl-L-Tyr, then undergoes condensation with L-Ser in a reaction catalyzed by the non-ribosomal peptide synthase sirP to form the diketopiperazine (DKP) backbone. Further bishydroxylation of the DKP performed by the cytochrome P450 monooxygenase sirC leads to the production of the intermediate phomamide. This step is essential to form the reactive thiol group required for toxicity of sirodesmin PL. The next steps of sirodesmin biosynthesis are not well understood yet, but some predictions could be made from intermediate compounds identification. Phomamide is converted into phomalizarine via oxidation, probably by sirT. Further oxidation, methylation (by sirM or sirN) and reduction steps convert phomalizarine to deacetyl sirodesmin. Finally, acetyltransferase sirH probably acetylates deacetyl sirodesmin to produce sirodesmin PL. The sequence is that of Thioredoxin reductase sirT from Leptosphaeria maculans (Blackleg fungus).